Reading from the N-terminus, the 224-residue chain is PKHD-type hydroxylase Sbal_3634 (224 aa).

The Fe2OG dioxygenase domain occupies 78 to 176 (QFYPPLFNRY…RTAAFMWLQS (99 aa)). Positions 96, 98, and 157 each coordinate Fe cation. Arginine 167 contacts 2-oxoglutarate.

It depends on Fe(2+) as a cofactor. The cofactor is L-ascorbate.

This is PKHD-type hydroxylase Sbal_3634 from Shewanella baltica (strain OS155 / ATCC BAA-1091).